A 1090-amino-acid chain; its full sequence is MAQSIVVDGDYDALASRYLKFVYDFENVTYQNNYFATDKFKKDIEQYLKSIHDGEKITQSKIDEKEKILLDRVPAEERCLISKLVFAYGKHGNVENKLVKYGVKDALSHAPQKDAKPYENNIITSEIFKEKSEYTDIYMDPSINTSCQSNCQAMMFTISEMKLNNIKNAARLEKLFTIIAATINKYGMPRHNTRYRYEWETMKNKPYHLAAWINSSIEMIACVVDHHTYMIARELIVKSFTNRTSLAKLVSSPMTVLTAMLPIRGTFITTENLELEYSNKSINYLISKEMAEDFMQAIKQLRDEGLEYIPDYYEKWFKSPDPLTFPNIALIYSFSFHVGYRKQALSDAVYDQITVTYSDNVNMEMYKEYSERIENEIFTILKDKIIHEDKRLEEYELSALLSMSSASNGILREINFGGQKVRSTKKNMHVIDDIYHKKYTTDIPPVDARNPIPLGRRDVPGRRTRAIFILPYQYFIAQHSFAEIMLNYAKREREYSEFYSQANQVLSYGDVTRYLDSNSILCFTDVSQWDASQHNTKVLRRSIIRAMKRLKQLTHNINIHKAINIYIQSQENLENSYVLIDKKAIQYGATASGEKQTKIMNSIANKALIQTVLGKLMTDYTFDVKMIRVDGDDNYAIVRFPIAITEKLLSEFTSKLRSYYSEMNVKVKALASLTGCEIAKRYVAGGMLFFRAGVNILHHEKRNQDSAYDMAATLYANYIVNALRGLTMSRTFILTKICQMTSIKITGTLRLFPMKSILALNSAFKVFDEVDYVINYPISNLFIQLQRKLSSIKAKSKIADNIAKSPQFKSYVELLNKSLTTDENPIVSDGIRLTEKAKLNSYAPIALEKRRDQFSIMVSFLQNPTTFKSETVVTINDVLYFISGFIKIDSSTVLPKEENNTMPLLPAIIKRTLSYFGLRTHDYDIKGSSSTVSKIIKQYSVYTPGIEELYEIVNKSVDTIRGYFASFNVPKADVDTYISTQMYKHDRFKILQAYIYNLLSVNYGMYQLVDLNSARFFDHVIHTPMAKTPTAVFMIDLALRLKIINHCIEKGEIITVSVHANKTDYLKLWRMLWNVKTMNSPYSKNSMFDE.

Positions 506–678 constitute a RdRp catalytic domain; sequence LSYGDVTRYL…ALASLTGCEI (173 aa).

This sequence belongs to the reoviridae RNA-directed RNA polymerase family. Interacts with VP3 (Potential). Interacts with VP2; this interaction activates VP1. Interacts with NSP5; this interaction is probably necessary for the formation of functional virus factories. Interacts with NSP2; this interaction is weak. Mg(2+) is required as a cofactor.

It localises to the virion. It carries out the reaction RNA(n) + a ribonucleoside 5'-triphosphate = RNA(n+1) + diphosphate. Its function is as follows. RNA-directed RNA polymerase that is involved in both transcription and genome replication. Together with VP3 capping enzyme, forms an enzyme complex positioned near the channels situated at each of the five-fold vertices of the core. Following infection, the outermost layer of the virus is lost, leaving a double-layered particle (DLP) made up of the core and VP6 shell. VP1 then catalyzes the transcription of fully conservative plus-strand genomic RNAs that are extruded through the DLP's channels into the cytoplasm where they function as mRNAs for translation of viral proteins. One copy of each of the viral (+)RNAs is also recruited during core assembly, together with newly synthesized polymerase complexes and VP2. The polymerase of these novo-formed particles catalyzes the synthesis of complementary minus-strands leading to dsDNA formation. To do so, the polymerase specifically recognizes conserved 3' sequence(s) in plus-strand RNA templates. Once dsRNA synthesis is complete, the polymerase switches to the transcriptional mode, thus providing secondary transcription. The protein is RNA-directed RNA polymerase of Rotavirus C (isolate RVC/Human/United Kingdom/Bristol/1989) (RV-C).